Here is a 642-residue protein sequence, read N- to C-terminus: Chaperone protein DnaK (642 aa).

T198 carries the post-translational modification Phosphothreonine; by autocatalysis. The segment at 602–642 is disordered; it reads EAAGGAEAEAAAGGHGGASGSHDDKVVDADFEEVDGDKKGK. The span at 603 to 613 shows a compositional bias: low complexity; that stretch reads AAGGAEAEAAA.

It belongs to the heat shock protein 70 family.

In terms of biological role, acts as a chaperone. This Paramagnetospirillum magneticum (strain ATCC 700264 / AMB-1) (Magnetospirillum magneticum) protein is Chaperone protein DnaK.